We begin with the raw amino-acid sequence, 630 residues long: SHC-transforming protein 4 (630 aa).

The interval 1-185 (MRERGQDSLA…RQDRHFLQHL (185 aa)) is CH2. Disordered stretches follow at residues 39-80 (TSLD…QESP) and 118-150 (KLQE…QQDL). Low complexity predominate over residues 125-142 (PGSSGPSSPETSLSRSGT). Residues 186-369 (LGMGMNYCVR…VHIDSHAEER (184 aa)) enclose the PID domain. The segment at 370-525 (EDHEYYNEIP…HIKQQLWSEE (156 aa)) is CH1. Y424 is subject to Phosphotyrosine. Composition is skewed to polar residues over residues 471-486 (LQST…SAQP) and 502-513 (PGATAQPASSHS). A disordered region spans residues 471-514 (LQSTPGSAGNQRSAQPLGSPWHCGKAPETVQPGATAQPASSHSL). The region spanning 526-617 (CYHGKLSRKA…GSEVSLKQPV (92 aa)) is the SH2 domain.

Interacts (via PID domain) with phosphorylated MUSK (via NPXY motif); undergoes tyrosine phosphorylation downstream of activated MUSK. Interacts with GRB2; the interaction is dependent of Tyr-424 phosphorylation and increased by EGF. Post-translationally, phosphorylated; the phosphorylation is enhanced by EGF. Phosphorylation at Tyr-424 is required for the interaction with GRB2. In terms of tissue distribution, only expressed in melanomas. Weakly expressed in normal melanocytes and benign nevi. Highly expressed at the transition from radial growth phase to vertical growth phase and metastatic melanomas, when tumor cells acquire migratory competence and invasive potential.

The protein localises to the postsynaptic cell membrane. Its function is as follows. Activates both Ras-dependent and Ras-independent migratory pathways in melanomas. Contributes to the early phases of agrin-induced tyrosine phosphorylation of CHRNB1. This Homo sapiens (Human) protein is SHC-transforming protein 4 (SHC4).